A 178-amino-acid chain; its full sequence is MSRIGNKVITLPAGVEVTNKDNVVTVKGPKGELTREFPKVIEIKIEGTEVTLHRPNDSKEMKTIHGTARANLNNMVIGVSEGFKKELEMRGVGYRAQLQGKKLVLSVGKSHPDEVEAPEGITFEVPTATAIVVNGINKEVVGQTAAYIRGLRVPEPYKGKGIRYAGEYVRRKEGKTGK.

It belongs to the universal ribosomal protein uL6 family. As to quaternary structure, part of the 50S ribosomal subunit.

In terms of biological role, this protein binds to the 23S rRNA, and is important in its secondary structure. It is located near the subunit interface in the base of the L7/L12 stalk, and near the tRNA binding site of the peptidyltransferase center. The protein is Large ribosomal subunit protein uL6 of Streptococcus mutans serotype c (strain ATCC 700610 / UA159).